A 452-amino-acid chain; its full sequence is Pre-mRNA-splicing factor prp46 (452 aa).

Positions 61–70 (AAKQAQAAAA) are enriched in low complexity. The disordered stretch occupies residues 61–129 (AAKQAQAAAA…SATRQQPPEW (69 aa)). Polar residues predominate over residues 114-125 (SLIQRPSATRQQ). WD repeat units follow at residues 141–180 (GHLGWVRSLAVEPNNEWFASGAGDRTIKIWNLATGALRLT), 183–222 (GHISTVRGLAVSPRHPYLFSCGEDKMVKCWDLETNKVIRH), 225–264 (GHLSGVYTLALHPRLDLLVTGGRDGVARVWDMRTRSNIHV), 267–308 (GHTG…GVLT), 310–349 (HKKGIRSLATHPREFTFASASTGSIKQWKCPGGEFMQNFE), 350–388 (GHNAIINTLSVNEDNVLFSGGDNGSMSFWDWKTGYRYQT), and 399–438 (EAEAGIMTSTFDRTGLRLITGEADKTIKVWKQDDQATPET). Positions 432–452 (DQATPETHPVTWAPTLGRQRY) are disordered.

Belongs to the WD repeat PRL1/PRL2 family. In terms of assembly, associated with the spliceosome.

The protein resides in the cytoplasm. The protein localises to the nucleus. Its function is as follows. Involved in pre-mRNA splicing and required for cell cycle progression at G2/M. This chain is Pre-mRNA-splicing factor prp46 (prp46), found in Emericella nidulans (strain FGSC A4 / ATCC 38163 / CBS 112.46 / NRRL 194 / M139) (Aspergillus nidulans).